A 602-amino-acid chain; its full sequence is MKPYKIENIRNFSIIAHIDHGKSTIADRLLESTSTIEQREMREQLLDSMDLERERGITIKAHPVTMTYEYEGETYELNLIDTPGHVDFSYEVSRSLAACEGALLIVDAAQGVQAQSLANVYLALERDLEIIPVLNKIDLPAAQPEAIKKQIEEFIGLDTSNTIACSAKTGQGIPEILESIIRLVPPPKPPQETELKALIFDSHYDPYVGIMVYVRVISGEIKKGDRITFMATKGSSFEVLGIGAFLPEATLMEGSLRAGQVGYFIANLKKVKDVKIGDTVTTVKHPAKEPLEGFKEIKPVVFAGIYPIDSSDFDTLKDALGRLQLNDSALTIEQESSHSLGFGFRCGFLGLLHLEIIFERISREFDLDIIATAPSVIYKVVLKNGKTLFIDNPTAYPDPALIEHMEEPWVHVNIITPQEYLSNIMSLCMDKRGICLKTDMLDQHRLVLSYELPLNEIVSDFNDKLKSVTKGYGSFDYRLGDYKKGAIIKLEILINDEAVDAFSCLVHRDKAESKGRSICEKLVDVIPPQLFKIPIQAAINKKIIARETIRALAKNVTAKCYGGDITRKRKLWDKQKKGKKRMKEFGKVSIPNTAFVEVLKME.

One can recognise a tr-type G domain in the interval 7–188 (ENIRNFSIIA…SIIRLVPPPK (182 aa)). GTP-binding positions include 19–24 (DHGKST) and 135–138 (NKID).

Belongs to the TRAFAC class translation factor GTPase superfamily. Classic translation factor GTPase family. LepA subfamily.

The protein localises to the cell inner membrane. The enzyme catalyses GTP + H2O = GDP + phosphate + H(+). Its function is as follows. Required for accurate and efficient protein synthesis under certain stress conditions. May act as a fidelity factor of the translation reaction, by catalyzing a one-codon backward translocation of tRNAs on improperly translocated ribosomes. Back-translocation proceeds from a post-translocation (POST) complex to a pre-translocation (PRE) complex, thus giving elongation factor G a second chance to translocate the tRNAs correctly. Binds to ribosomes in a GTP-dependent manner. The protein is Elongation factor 4 of Chlamydia trachomatis serovar L2 (strain ATCC VR-902B / DSM 19102 / 434/Bu).